The sequence spans 418 residues: Serine hydroxymethyltransferase (418 aa).

Residues leucine 121 and 125–127 (GHL) contribute to the (6S)-5,6,7,8-tetrahydrofolate site. Lysine 230 carries the N6-(pyridoxal phosphate)lysine modification. 356-358 (SPF) contacts (6S)-5,6,7,8-tetrahydrofolate.

Belongs to the SHMT family. In terms of assembly, homodimer. Requires pyridoxal 5'-phosphate as cofactor.

It localises to the cytoplasm. It catalyses the reaction (6R)-5,10-methylene-5,6,7,8-tetrahydrofolate + glycine + H2O = (6S)-5,6,7,8-tetrahydrofolate + L-serine. The protein operates within one-carbon metabolism; tetrahydrofolate interconversion. It functions in the pathway amino-acid biosynthesis; glycine biosynthesis; glycine from L-serine: step 1/1. In terms of biological role, catalyzes the reversible interconversion of serine and glycine with tetrahydrofolate (THF) serving as the one-carbon carrier. This reaction serves as the major source of one-carbon groups required for the biosynthesis of purines, thymidylate, methionine, and other important biomolecules. Also exhibits THF-independent aldolase activity toward beta-hydroxyamino acids, producing glycine and aldehydes, via a retro-aldol mechanism. The polypeptide is Serine hydroxymethyltransferase (Idiomarina loihiensis (strain ATCC BAA-735 / DSM 15497 / L2-TR)).